Consider the following 464-residue polypeptide: Glucan 1,3-beta-glucosidase 3 (464 aa).

The protein belongs to the glycosyl hydrolase 5 (cellulase A) family.

It carries out the reaction Successive hydrolysis of beta-D-glucose units from the non-reducing ends of (1-&gt;3)-beta-D-glucans, releasing alpha-glucose.. The protein is Glucan 1,3-beta-glucosidase 3 (exg3) of Schizosaccharomyces pombe (strain 972 / ATCC 24843) (Fission yeast).